The sequence spans 491 residues: Probable CtpA-like serine protease (491 aa).

A disordered region spans residues 1 to 22; it reads MNDHQKNHATSQDDNTKSTPSK. Residues 8–22 are compositionally biased toward polar residues; it reads HATSQDDNTKSTPSK. Residues 31–51 traverse the membrane as a helical segment; it reads LWHFILVILGIILLTSIITVV. Residues 119–201 form the PDZ domain; it reads TKQFNEGVSG…TYVTLTIKRG (83 aa). Residues Ser-324, Asp-335, and Lys-349 each act as charge relay system in the active site.

It belongs to the peptidase S41A family.

Its subcellular location is the cell membrane. The sequence is that of Probable CtpA-like serine protease from Staphylococcus epidermidis (strain ATCC 12228 / FDA PCI 1200).